The following is a 419-amino-acid chain: 3-isopropylmalate dehydratase large subunit (419 aa).

[4Fe-4S] cluster-binding residues include cysteine 300, cysteine 360, and cysteine 363.

This sequence belongs to the aconitase/IPM isomerase family. LeuC type 2 subfamily. Heterodimer of LeuC and LeuD. It depends on [4Fe-4S] cluster as a cofactor.

It catalyses the reaction (2R,3S)-3-isopropylmalate = (2S)-2-isopropylmalate. The protein operates within amino-acid biosynthesis; L-leucine biosynthesis; L-leucine from 3-methyl-2-oxobutanoate: step 2/4. Its function is as follows. Catalyzes the isomerization between 2-isopropylmalate and 3-isopropylmalate, via the formation of 2-isopropylmaleate. The polypeptide is 3-isopropylmalate dehydratase large subunit (Clostridium botulinum (strain Eklund 17B / Type B)).